The primary structure comprises 83 residues: RNA-binding protein Hfq (83 aa).

Residues 10–69 enclose the Sm domain; the sequence is DPFLNALRREHVPVSIYLVNGIKLQGQIESFDQYVVLLRNTVTQMVYKHAISTIVPGRAV.

The protein belongs to the Hfq family. In terms of assembly, homohexamer.

Its function is as follows. RNA chaperone that binds small regulatory RNA (sRNAs) and mRNAs to facilitate mRNA translational regulation in response to envelope stress, environmental stress and changes in metabolite concentrations. Also binds with high specificity to tRNAs. This chain is RNA-binding protein Hfq, found in Acidovorax ebreus (strain TPSY) (Diaphorobacter sp. (strain TPSY)).